Reading from the N-terminus, the 430-residue chain is Adenylosuccinate synthetase (430 aa).

GTP is bound by residues 12–18 and 40–42; these read GDEGKGK and GHT. Asp13 serves as the catalytic Proton acceptor. Asp13 and Gly40 together coordinate Mg(2+). IMP-binding positions include 13-16, 38-41, Thr128, Arg142, Gln223, Thr238, and Arg302; these read DEGK and NAGH. Catalysis depends on His41, which acts as the Proton donor. Position 298-304 (298-304) interacts with substrate; it reads TTTGRPR. Residues Arg304, 330–332, and 412–414 contribute to the GTP site; these read SID and SVG.

This sequence belongs to the adenylosuccinate synthetase family. As to quaternary structure, homodimer. Mg(2+) is required as a cofactor.

It localises to the cytoplasm. The catalysed reaction is IMP + L-aspartate + GTP = N(6)-(1,2-dicarboxyethyl)-AMP + GDP + phosphate + 2 H(+). It participates in purine metabolism; AMP biosynthesis via de novo pathway; AMP from IMP: step 1/2. Functionally, plays an important role in the de novo pathway of purine nucleotide biosynthesis. Catalyzes the first committed step in the biosynthesis of AMP from IMP. The protein is Adenylosuccinate synthetase of Streptococcus pyogenes serotype M6 (strain ATCC BAA-946 / MGAS10394).